We begin with the raw amino-acid sequence, 395 residues long: Sensor protein DltS (395 aa).

2 helical membrane-spanning segments follow: residues 9 to 29 (FVFLTMSILIVVVLFLFAVSN) and 136 to 156 (FLILVFTIFGFCLLAAVSLYL). The Histidine kinase domain occupies 177 to 387 (DASHELKTPI…RLEVQLPIDG (211 aa)). His180 carries the post-translational modification Phosphohistidine; by autocatalysis.

It localises to the cell membrane. It catalyses the reaction ATP + protein L-histidine = ADP + protein N-phospho-L-histidine.. Member of the two-component regulatory system DltS/DltR. Regulates the expression of the dlt operon. Probably phosphorylates DltR. The polypeptide is Sensor protein DltS (dltS) (Streptococcus agalactiae serotype III (strain NEM316)).